The following is a 170-amino-acid chain: Adenine phosphoribosyltransferase (170 aa).

Belongs to the purine/pyrimidine phosphoribosyltransferase family. As to quaternary structure, homodimer.

Its subcellular location is the cytoplasm. It catalyses the reaction AMP + diphosphate = 5-phospho-alpha-D-ribose 1-diphosphate + adenine. Its pathway is purine metabolism; AMP biosynthesis via salvage pathway; AMP from adenine: step 1/1. In terms of biological role, catalyzes a salvage reaction resulting in the formation of AMP, that is energically less costly than de novo synthesis. This Mycoplasma mycoides subsp. mycoides SC (strain CCUG 32753 / NCTC 10114 / PG1) protein is Adenine phosphoribosyltransferase.